Reading from the N-terminus, the 326-residue chain is Probable cell division protein WhiA (326 aa).

Positions 275–308 (SLDELGRLADPPMTKDAIAGRIRRLLAMADKRAL) form a DNA-binding region, H-T-H motif.

The protein belongs to the WhiA family.

Involved in cell division and chromosome segregation. The chain is Probable cell division protein WhiA from Paenarthrobacter aurescens (strain TC1).